The sequence spans 122 residues: Large ribosomal subunit protein uL14 (122 aa).

This sequence belongs to the universal ribosomal protein uL14 family. As to quaternary structure, part of the 50S ribosomal subunit. Forms a cluster with proteins L3 and L19. In the 70S ribosome, L14 and L19 interact and together make contacts with the 16S rRNA in bridges B5 and B8.

Its function is as follows. Binds to 23S rRNA. Forms part of two intersubunit bridges in the 70S ribosome. This is Large ribosomal subunit protein uL14 from Sulfurihydrogenibium sp. (strain YO3AOP1).